The following is a 134-amino-acid chain: Ribosome-binding factor A (134 aa).

The segment at 115 to 134 (EDQRQERGEIPPGSDELQPD) is disordered.

It belongs to the RbfA family. Monomer. Binds 30S ribosomal subunits, but not 50S ribosomal subunits or 70S ribosomes.

The protein localises to the cytoplasm. One of several proteins that assist in the late maturation steps of the functional core of the 30S ribosomal subunit. Associates with free 30S ribosomal subunits (but not with 30S subunits that are part of 70S ribosomes or polysomes). Required for efficient processing of 16S rRNA. May interact with the 5'-terminal helix region of 16S rRNA. In Synechococcus sp. (strain CC9902), this protein is Ribosome-binding factor A.